The primary structure comprises 158 residues: Transcription elongation factor GreA (158 aa).

Belongs to the GreA/GreB family.

In terms of biological role, necessary for efficient RNA polymerase transcription elongation past template-encoded arresting sites. The arresting sites in DNA have the property of trapping a certain fraction of elongating RNA polymerases that pass through, resulting in locked ternary complexes. Cleavage of the nascent transcript by cleavage factors such as GreA or GreB allows the resumption of elongation from the new 3'terminus. GreA releases sequences of 2 to 3 nucleotides. In Ruthia magnifica subsp. Calyptogena magnifica, this protein is Transcription elongation factor GreA.